Here is a 206-residue protein sequence, read N- to C-terminus: Large ribosomal subunit protein uL4 (206 aa).

This sequence belongs to the universal ribosomal protein uL4 family. In terms of assembly, part of the 50S ribosomal subunit.

In terms of biological role, one of the primary rRNA binding proteins, this protein initially binds near the 5'-end of the 23S rRNA. It is important during the early stages of 50S assembly. It makes multiple contacts with different domains of the 23S rRNA in the assembled 50S subunit and ribosome. Its function is as follows. Forms part of the polypeptide exit tunnel. The chain is Large ribosomal subunit protein uL4 from Rhodopseudomonas palustris (strain ATCC BAA-98 / CGA009).